The following is a 106-amino-acid chain: Nucleoid-associated protein RPA0616 (106 aa).

It belongs to the YbaB/EbfC family. In terms of assembly, homodimer.

The protein resides in the cytoplasm. It localises to the nucleoid. Binds to DNA and alters its conformation. May be involved in regulation of gene expression, nucleoid organization and DNA protection. The protein is Nucleoid-associated protein RPA0616 of Rhodopseudomonas palustris (strain ATCC BAA-98 / CGA009).